The sequence spans 685 residues: Delta-like protein 4 (685 aa).

A signal peptide spans 1–26 (MAAASRSASGWALLLLVALWQQRAAG). Over 27 to 529 (SGVFQLQLQE…PVGLPPSFPW (503 aa)) the chain is Extracellular. 2 cysteine pairs are disulfide-bonded: Cys-50/Cys-54 and Cys-61/Cys-74. 2 N-linked (GlcNAc...) asparagine glycosylation sites follow: Asn-108 and Asn-183. The region spanning 173 to 217 (VICSDNYYGDNCSRLCKKRNDHFGHYVCQPDGNLSCLPGWTGEYC) is the DSL domain. A disulfide bridge connects residues Cys-175 and Cys-184. Interaction with Notch1 regions lie at residues 185–187 (SRL) and 191–195 (RNDHF). Residues Cys-188 and Cys-200 are joined by a disulfide bond. The N-linked (GlcNAc...) asparagine glycan is linked to Asn-205. 25 disulfide bridges follow: Cys-208–Cys-217, Cys-222–Cys-233, Cys-226–Cys-239, Cys-241–Cys-250, Cys-253–Cys-264, Cys-259–Cys-270, Cys-272–Cys-281, Cys-288–Cys-300, Cys-294–Cys-310, Cys-312–Cys-321, Cys-328–Cys-339, Cys-333–Cys-348, Cys-350–Cys-359, Cys-366–Cys-377, Cys-371–Cys-388, Cys-390–Cys-399, Cys-406–Cys-417, Cys-411–Cys-426, Cys-428–Cys-437, Cys-444–Cys-455, Cys-449–Cys-464, Cys-466–Cys-475, Cys-484–Cys-495, Cys-489–Cys-506, and Cys-508–Cys-517. 8 EGF-like domains span residues 218–251 (QQPICLSGCHEQNGYCSKPAECLCRPGWQGRLCN), 252–282 (ECIPHNGCRHGTCSTPWQCTCDEGWGGLFCD), 284–322 (DLNYCTHHSPCKNGATCSNSGQRSYTCTCRPGYTGVDCE), 324–360 (ELSECDSNPCRNGGSCKDQEDGYHCLCPPGYYGLHCE), 362–400 (STLSCADSPCFNGGSCRERNQGANYACECPPNFTGSNCE), 402–438 (KVDRCTSNPCANGGQCLNRGPSRMCRCRPGFTGTYCE), 440–476 (HVSDCARNPCAHGGTCHDLENGLMCTCPAGFSGRRCE), and 480–518 (SIDACASSPCFNRATCYTDLSTDTFVCNCPYGFVGSRCE). N-linked (GlcNAc...) asparagine glycosylation is present at Asn-393. A helical transmembrane segment spans residues 530–550 (VAVSLGVGLAVLLVLLGMVAV). The Cytoplasmic portion of the chain corresponds to 551–685 (AVRQLRLRRP…RNECVIATEV (135 aa)).

As to quaternary structure, interacts with NOTCH4. Interacts (via N-terminal DSL and MNNL domains) with NOTCH1 (via EGF-like domains). As to expression, expressed in vascular endothelium.

It is found in the cell membrane. Functionally, involved in the Notch signaling pathway as Notch ligand. Activates NOTCH1 and NOTCH4. Involved in angiogenesis; negatively regulates endothelial cell proliferation and migration and angiogenic sprouting. Essential for retinal progenitor proliferation. Required for suppressing rod fates in late retinal progenitors as well as for proper generation of other retinal cell types. During spinal cord neurogenesis, inhibits V2a interneuron fate. This Homo sapiens (Human) protein is Delta-like protein 4 (DLL4).